A 337-amino-acid chain; its full sequence is Cathepsin L-like (337 aa).

The N-terminal stretch at 1–18 is a signal peptide; the sequence is MNRFILLALVAAVVAVNS. A propeptide spans 19–119 (activation peptide); the sequence is AKLSRQIESA…SSFLAPFNVQ (101 aa). Residue Asn108 is glycosylated (N-linked (GlcNAc...) asparagine). Intrachain disulfides connect Cys141-Cys184, Cys175-Cys217, and Cys276-Cys326. The active site involves Cys144. Catalysis depends on residues His283 and Asn304.

It belongs to the peptidase C1 family. Expressed in intestine, pharynx posterior bulb, hypodermis and cuticle (at protein level). Expressed in germ cells, developing oocytes, sheath cells surrounding germ cells and oocytes, and in the eggshell (at protein level).

It is found in the secreted. The protein localises to the cytoplasmic granule. It localises to the lysosome. The protein resides in the endosome. Its subcellular location is the cytoplasmic vesicle. It is found in the phagosome. It catalyses the reaction Specificity close to that of papain. As compared to cathepsin B, cathepsin L exhibits higher activity toward protein substrates, but has little activity on Z-Arg-Arg-NHMec, and no peptidyl-dipeptidase activity.. Cysteine protease which plays an essential role in the degradation of proteins in lysosomes. During early embryogenesis, maternally required for the proteolytic processing of yolk proteins in platelets, a lysosome-like structure where a slow and controlled degradation of yolk proteins occurs. In the gonad, required for the clearance of apoptotic germ cells in the engulfing cell phagolysosomes. In embryos, required for the degradation of endocytic and autophagic cargos. In embryos, may play a role in the degradation of lipid-containing droplets. Required for larval development. The chain is Cathepsin L-like from Caenorhabditis elegans.